The following is a 712-amino-acid chain: Cyclolysin secretion/processing ATP-binding protein CyaB (712 aa).

One can recognise a Peptidase C39 domain in the interval 7–128 (QCASVPDSGL…ALWAGELLLC (122 aa)). The region spanning 157-439 (IGEVLLISLV…LAQLWNDFQQ (283 aa)) is the ABC transmembrane type-1 domain. Helical transmembrane passes span 160–180 (VLLI…FFQV), 194–214 (LNVI…LTGI), 272–292 (AVTV…MFFY), 298–318 (LVVL…TPVL), 367–387 (VAAG…VTLI), and 390–410 (LVAL…RMTV). One can recognise an ABC transporter domain in the interval 471–706 (IELDRVSFRY…GGLYARLQAL (236 aa)). 505–512 (GRSGSGKS) lines the ATP pocket.

It belongs to the ABC transporter superfamily. Cyclolysin exporter (TC 3.A.1.109.2) family.

The protein resides in the cell membrane. Functionally, involved in the export of calmodulin-sensitive adenylate cyclase-hemolysin (cyclolysin). The protein is Cyclolysin secretion/processing ATP-binding protein CyaB (cyaB) of Bordetella pertussis (strain ATCC 9797 / DSM 5571 / CCUG 30873 / LMG 14455 / NCTC 10739 / 18323).